A 764-amino-acid polypeptide reads, in one-letter code: G-type lectin S-receptor-like serine/threonine-protein kinase SD3-1 (764 aa).

Residues 1-24 (MKMLRALLLCLSLVFFLAFQIVVS) form the signal peptide. Bulb-type lectin domains follow at residues 25 to 151 (EIQL…QSFG) and 154 to 279 (TDTL…WKPV). Over 25–442 (EIQLGSKLVV…TKSHSICIPC (418 aa)) the chain is Extracellular. N-linked (GlcNAc...) asparagine glycosylation is found at Asn92, Asn198, and Asn248. The 38-residue stretch at 283 to 320 (VENQCRVFATCGSQVCSFNSSGYTECNCPFNAFVSVSD) folds into the EGF-like; atypical domain. Cystine bridges form between Cys287–Cys298, Cys293–Cys308, Cys332–Cys413, Cys365–Cys388, and Cys369–Cys375. N-linked (GlcNAc...) asparagine glycans are attached at residues Asn301 and Asn353. The 82-residue stretch at 332-413 (CKSGFNMVKF…LSSISYVKTC (82 aa)) folds into the Apple domain. N-linked (GlcNAc...) asparagine glycosylation is present at Asn423. A helical membrane pass occupies residues 443–463 (LVGATSTTLVLFLGFQLGIVV). Residues 464 to 764 (YIYRRKKKLA…SESSQSLYEP (301 aa)) lie on the Cytoplasmic side of the membrane. Positions 466-764 (YRRKKKLAKK…SESSQSLYEP (299 aa)) constitute a Protein kinase domain. Residues 508 to 516 (IGPQIFKGV) and Lys526 each bind ATP. The segment at 586–603 (LRSKKLTWRIRTDTCLSV) is caM-binding. Residues 738-764 (DPPPPPFACARSSPTNSSESSQSLYEP) are disordered. Positions 749 to 764 (SSPTNSSESSQSLYEP) are enriched in low complexity.

It localises to the cell membrane. The enzyme catalyses L-seryl-[protein] + ATP = O-phospho-L-seryl-[protein] + ADP + H(+). The catalysed reaction is L-threonyl-[protein] + ATP = O-phospho-L-threonyl-[protein] + ADP + H(+). This Arabidopsis thaliana (Mouse-ear cress) protein is G-type lectin S-receptor-like serine/threonine-protein kinase SD3-1 (SD31).